Here is a 323-residue protein sequence, read N- to C-terminus: Acetyl-coenzyme A carboxylase carboxyl transferase subunit alpha (323 aa).

One can recognise a CoA carboxyltransferase C-terminal domain in the interval 36–293 (ELELLSAKAQ…KEEVVKNLQI (258 aa)).

This sequence belongs to the AccA family. As to quaternary structure, acetyl-CoA carboxylase is a heterohexamer composed of biotin carboxyl carrier protein (AccB), biotin carboxylase (AccC) and two subunits each of ACCase subunit alpha (AccA) and ACCase subunit beta (AccD).

The protein resides in the cytoplasm. The enzyme catalyses N(6)-carboxybiotinyl-L-lysyl-[protein] + acetyl-CoA = N(6)-biotinyl-L-lysyl-[protein] + malonyl-CoA. Its pathway is lipid metabolism; malonyl-CoA biosynthesis; malonyl-CoA from acetyl-CoA: step 1/1. Component of the acetyl coenzyme A carboxylase (ACC) complex. First, biotin carboxylase catalyzes the carboxylation of biotin on its carrier protein (BCCP) and then the CO(2) group is transferred by the carboxyltransferase to acetyl-CoA to form malonyl-CoA. This chain is Acetyl-coenzyme A carboxylase carboxyl transferase subunit alpha, found in Carboxydothermus hydrogenoformans (strain ATCC BAA-161 / DSM 6008 / Z-2901).